Here is a 1322-residue protein sequence, read N- to C-terminus: Sal-like protein 1 (1322 aa).

Residues 1–41 (MSRRKQAKPQHFQSDPEVASLPRRDGDTEKGQPSRPTKSKD) form a disordered region. The segment covering 22–41 (PRRDGDTEKGQPSRPTKSKD) has biased composition (basic and acidic residues). A C2H2-type 1; atypical zinc finger spans residues 43–65 (HVCGRCCAEFFELSDLLLHKKSC). Positions 78–128 (PASPAKTFPPGPSLNDPDDQMKDAANKADQEDCSDLSEPKGLDREESMEVE) are disordered. 2 stretches are compositionally biased toward basic and acidic residues: residues 96 to 107 (DQMKDAANKADQ) and 114 to 124 (SEPKGLDREES). Residue K440 forms a Glycyl lysine isopeptide (Lys-Gly) (interchain with G-Cter in SUMO2) linkage. 2 consecutive C2H2-type zinc fingers follow at residues 450–472 (HKCR…LRSH) and 478–500 (FKCN…FQRH). Residues 578-659 (PIPISHSAAS…GGPGGTTFTN (82 aa)) are disordered. The segment covering 584 to 594 (SAASPQGSVKS) has biased composition (polar residues). A phosphoserine mark is found at S591, S594, and S596. Polar residues predominate over residues 629-645 (NMASSAVPTAGNSTLNS). Residues K672, K689, and K700 each participate in a glycyl lysine isopeptide (Lys-Gly) (interchain with G-Cter in SUMO2) cross-link. C2H2-type zinc fingers lie at residues 705-727 (NECI…YRTH), 733-755 (FKCK…YSVH), and 765-787 (HSCP…IRMH). Disordered regions lie at residues 789-855 (GGQI…SSPL) and 891-961 (SMEG…GLSP). Positions 819-832 (DLDNFSDENMEECP) are enriched in acidic residues. Over residues 842–855 (SADASQDSLSSSPL) the composition is skewed to low complexity. Residues 898 to 935 (TNDSSSVGGDMESQSAGSPAISESTSSMQALSPSNSTQ) show a composition bias toward polar residues. Over residues 936 to 948 (EFHKSPGMEEKPQ) the composition is skewed to basic and acidic residues. S940 is subject to Phosphoserine. Residues K946 and K981 each participate in a glycyl lysine isopeptide (Lys-Gly) (interchain with G-Cter in SUMO2) cross-link. 2 C2H2-type zinc fingers span residues 1000–1022 (TACD…YRSH) and 1028–1050 (FICT…MLTH). K1085 is covalently cross-linked (Glycyl lysine isopeptide (Lys-Gly) (interchain with G-Cter in SUMO2)). A disordered region spans residues 1094–1119 (VSPQDSKDAPTSHVPQGPLSSSATSP). C2H2-type zinc fingers lie at residues 1133 to 1155 (HYCN…ERTH) and 1161 to 1183 (FACT…MGTH). Glycyl lysine isopeptide (Lys-Gly) (interchain with G-Cter in SUMO2) cross-links involve residues K1218, K1297, and K1317.

The protein belongs to the sal C2H2-type zinc-finger protein family. In terms of assembly, may associate with NuRD histone deacetylase complex (HDAC). Interacts with components of HDAC complex including HDAC1, HDAC2, RBBP4, RBPP7, MTA1 and MTA2. Interacts with CCNQ. Interacts with NSD2 (via PHD-type zinc fingers 1, 2 and 3). Expressed in the metanephric mesenchyme surrounding ureteric bud.

It is found in the nucleus. Its function is as follows. Transcriptional repressor involved in organogenesis. Plays an essential role in ureteric bud invasion during kidney development. This is Sal-like protein 1 (Sall1) from Mus musculus (Mouse).